The sequence spans 222 residues: Protein MKS1 (222 aa).

Residues 1-61 (MDPSEYFAGG…PNRDQPPPYI (61 aa)) are disordered. Polar residues predominate over residues 12–21 (PSDQQNQKRQ). At Ser-30 the chain carries Phosphoserine. Basic residues predominate over residues 37-46 (DSHKIKKPPK). Residues 47 to 61 (HPAPPPNRDQPPPYI) show a composition bias toward pro residues. Ser-72 is subject to Phosphoserine. The VQ motif lies at 83-92 (FMNVVQRLTG). The segment at 105-130 (GDVSPAARLASTENASPRGGKEPAAR) is disordered. Ser-108 and Ser-120 each carry phosphoserine.

As to quaternary structure, interacts with MPK4, WRKY25 and WRKY33. Post-translationally, phosphorylated on serine residue by MPK4.

It localises to the nucleus. Regulator of plant defense response. May contribute to MPK4-regulated defense activation by coupling the kinase to specific WRKY transcription factors. In Arabidopsis thaliana (Mouse-ear cress), this protein is Protein MKS1 (MKS1).